The following is a 581-amino-acid chain: Laccase-1 (581 aa).

Residues 1–25 (MENLGFLIISTFLLLFTTLLPYSSA) form the signal peptide. 2 Plastocyanin-like domains span residues 34–150 (NVEW…PRQP) and 161–312 (EIPI…YTGK). Asparagine 80 carries an N-linked (GlcNAc...) asparagine glycan. Residues histidine 84, histidine 86, histidine 129, and histidine 131 each contribute to the Cu cation site. N-linked (GlcNAc...) asparagine glycans are attached at residues asparagine 241, asparagine 300, asparagine 386, and asparagine 403. A Plastocyanin-like 3 domain is found at 429 to 565 (DFPEKPPNRF…AMGFIVKDGP (137 aa)). 7 residues coordinate Cu cation: histidine 482, histidine 485, histidine 487, histidine 544, cysteine 545, histidine 546, and histidine 550.

It belongs to the multicopper oxidase family. Requires Cu cation as cofactor. As to expression, expressed in roots, stems and flowers.

It localises to the secreted. Its subcellular location is the extracellular space. It is found in the apoplast. It carries out the reaction 4 hydroquinone + O2 = 4 benzosemiquinone + 2 H2O. Its function is as follows. Lignin degradation and detoxification of lignin-derived products. The protein is Laccase-1 (LAC1) of Arabidopsis thaliana (Mouse-ear cress).